A 195-amino-acid polypeptide reads, in one-letter code: Peroxiredoxin bcp1 (195 aa).

In terms of domain architecture, Thioredoxin spans 46-168; that stretch reads IQVGDVIPDI…SHWIFEKGTG (123 aa). The active-site Cysteine sulfenic acid (-SOH) intermediate is C89. A disulfide bridge links C89 with C94.

It belongs to the peroxiredoxin family. BCP/PrxQ subfamily. Monomer. Post-translationally, the active site is a conserved redox-active cysteine residue, the peroxidatic cysteine (C(P)), which makes the nucleophilic attack on the peroxide substrate. The peroxide oxidizes the C(P)-SH to cysteine sulfenic acid (C(P)-SOH), which then reacts with another cysteine residue, the resolving cysteine (C(R)), to form a disulfide bridge. The disulfide is subsequently reduced by an appropriate electron donor to complete the catalytic cycle. In this atypical 2-Cys peroxiredoxin, C(R) is present in the same subunit to form an intramolecular disulfide. The disulfide is subsequently reduced by thioredoxin.

The protein resides in the cytoplasm. The protein localises to the nucleus. The enzyme catalyses a hydroperoxide + [thioredoxin]-dithiol = an alcohol + [thioredoxin]-disulfide + H2O. Thiol-specific peroxidase that catalyzes the reduction of hydrogen peroxide and organic hydroperoxides to water and alcohols, respectively. Plays a role in cell protection against oxidative stress by detoxifying peroxides and as sensor of hydrogen peroxide-mediated signaling events. Acts as a scavenger of H(2)O(2). In Schizosaccharomyces pombe (strain 972 / ATCC 24843) (Fission yeast), this protein is Peroxiredoxin bcp1 (bcp1).